A 332-amino-acid chain; its full sequence is Glycerol-3-phosphate dehydrogenase [NAD(P)+] (332 aa).

NADPH contacts are provided by Trp-11, Arg-30, and Lys-108. 3 residues coordinate sn-glycerol 3-phosphate: Lys-108, Gly-137, and Ser-139. Ala-141 is an NADPH binding site. Sn-glycerol 3-phosphate contacts are provided by Lys-192, Asp-245, Ser-255, Arg-256, and Asn-257. The active-site Proton acceptor is the Lys-192. Arg-256 contacts NADPH. Residues Val-280 and Glu-282 each coordinate NADPH.

The protein belongs to the NAD-dependent glycerol-3-phosphate dehydrogenase family.

It localises to the cytoplasm. It catalyses the reaction sn-glycerol 3-phosphate + NAD(+) = dihydroxyacetone phosphate + NADH + H(+). It carries out the reaction sn-glycerol 3-phosphate + NADP(+) = dihydroxyacetone phosphate + NADPH + H(+). It functions in the pathway membrane lipid metabolism; glycerophospholipid metabolism. In terms of biological role, catalyzes the reduction of the glycolytic intermediate dihydroxyacetone phosphate (DHAP) to sn-glycerol 3-phosphate (G3P), the key precursor for phospholipid synthesis. This chain is Glycerol-3-phosphate dehydrogenase [NAD(P)+], found in Burkholderia cenocepacia (strain HI2424).